Here is a 726-residue protein sequence, read N- to C-terminus: PTS system glucose-specific EIICBA component (726 aa).

The PTS EIIC type-1 domain occupies 1–453 (MMKDTFKNVL…FNYATPGRNG (453 aa)). The next 9 membrane-spanning stretches (helical) occupy residues 18-38 (FGKALMVVIAVMPAAGLMISI), 62-82 (IGWGVIGNLHILFALAIGGSW), 90-110 (AFAAGLAFILINRITGTIFGV), 139-159 (VLEAPALNMGVFVGIISGFVG), 184-204 (FVPFVVILRSAIAAILLAAFW), 311-331 (FKVGQMIGSFGILMGVIVAIY), 344-364 (GMMIATALATFLTGVTEPIEY), 365-385 (MFMFIATPMYLVYSLVQGAAF), and 419-439 (IVNFVWVTVLFAVIMYFIANF). In terms of domain architecture, PTS EIIB type-1 spans 473–555 (GSQAVNIINL…QDILDSGEII (83 aa)). Residue cysteine 495 is the Phosphocysteine intermediate; for EIIB activity of the active site. One can recognise a PTS EIIA type-1 domain in the interval 596-700 (DPVFAQKMMG…ETSTVVVFTN (105 aa)). Histidine 648 functions as the Tele-phosphohistidine intermediate; for EIIA activity in the catalytic mechanism.

It localises to the cell membrane. The catalysed reaction is N(pros)-phospho-L-histidyl-[protein] + D-glucose(out) = D-glucose 6-phosphate(in) + L-histidyl-[protein]. The phosphoenolpyruvate-dependent sugar phosphotransferase system (sugar PTS), a major carbohydrate active transport system, catalyzes the phosphorylation of incoming sugar substrates concomitantly with their translocation across the cell membrane. This system is involved in glucose transport. This chain is PTS system glucose-specific EIICBA component (exp5), found in Streptococcus pneumoniae serotype 4 (strain ATCC BAA-334 / TIGR4).